The chain runs to 1252 residues: Myosin-1 (1252 aa).

The tract at residues Met-1–Ala-27 is disordered. One can recognise a Myosin motor domain in the interval Val-38–Asp-712. Gly-128–Thr-135 lines the ATP pocket. A Phosphoserine modification is found at Ser-356. The tract at residues Ile-403–Ala-485 is actin-binding. IQ domains lie at His-716–Cys-736 and Ala-737–Gln-762. The TH1 domain occupies Arg-770–Pro-953. Disordered regions lie at residues Val-945–Pro-1049 and Pro-1103–Ala-1228. 2 stretches are compositionally biased toward pro residues: residues Arg-989–Gln-999 and Arg-1028–Pro-1046. The SH3 domain occupies Pro-1046–Pro-1104. Residues Ala-1162 to Ile-1175 are compositionally biased toward polar residues. Residues Lys-1178–Pro-1193 are compositionally biased toward pro residues. The segment covering Val-1194–Pro-1203 has biased composition (low complexity). A compositionally biased stretch (pro residues) spans Ala-1204–Pro-1215. The span at Ala-1216–Ala-1228 shows a compositional bias: low complexity.

Belongs to the TRAFAC class myosin-kinesin ATPase superfamily. Myosin family. Post-translationally, phosphorylation of the TEDS site (Ser-356) is required for the polarization of the actin cytoskeleton. Phosphorylation probably activates the myosin-I ATPase activity.

Its subcellular location is the cytoplasm. The protein localises to the cytoskeleton. The protein resides in the actin patch. Its function is as follows. Type-I myosin implicated in the organization of the actin cytoskeleton. Required for proper actin cytoskeleton polarization. At the cell cortex, assembles in patch-like structures together with proteins from the actin-polymerizing machinery and promotes actin assembly. Functions as actin nucleation-promoting factor (NPF) for the Arp2/3 complex. The sequence is that of Myosin-1 (MYO1) from Laccaria bicolor (strain S238N-H82 / ATCC MYA-4686) (Bicoloured deceiver).